A 292-amino-acid polypeptide reads, in one-letter code: Glyoxylase B2 (292 aa).

Zn(2+) is bound by residues histidine 72, histidine 74, aspartate 76, histidine 77, histidine 148, and aspartate 166. Residues 175–181 (TARCDFP), 208–210 (HDY), and 284–287 (KIPL) contribute to the substrate site. Residue histidine 208 participates in Zn(2+) binding.

This sequence belongs to the metallo-beta-lactamase superfamily. Glyoxalase II family. Zn(2+) serves as cofactor.

The sequence is that of Glyoxylase B2 (gloB2) from Dictyostelium discoideum (Social amoeba).